We begin with the raw amino-acid sequence, 406 residues long: Gustatory receptor for sugar taste 64b (406 aa).

At 1–47 (MPQGETFHRAVSNVLFISQIYGLLPVSNVRALDVADIRFRWCSPRIL) the chain is on the cytoplasmic side. Residues 48 to 68 (YSLLIGILNLSEFGAVINYVI) traverse the membrane as a helical segment. Residues 69-79 (KVTINFHTSST) lie on the Extracellular side of the membrane. Residues 80-100 (LSLYIVCLLEHLFFWRLAIQW) form a helical membrane-spanning segment. Over 101–130 (PRIMRTWHGVEQLFLRVPYRFYGEYRIKRR) the chain is Cytoplasmic. Residues 131–151 (IYIVFTIVMSSALVEHCLLLG) traverse the membrane as a helical segment. Residues 152–183 (NSFHLSNMERTQCKINVTYFESIYKWERPHLY) are Extracellular-facing. An N-linked (GlcNAc...) asparagine glycan is attached at asparagine 167. Residues 184–204 (MILPYHFWMLPILEWVNQTIA) traverse the membrane as a helical segment. Residues 205-265 (YPRSFTDCFI…KRLVHLLDAA (61 aa)) lie on the Cytoplasmic side of the membrane. A helical transmembrane segment spans residues 266 to 286 (IAPLVLLAFGNNMSFICFQLF). Residues 287–290 (NSFK) lie on the Extracellular side of the membrane. Residues 291–311 (NIGVDFLVMLAFWYSLGFAVV) form a helical membrane-spanning segment. Over 312–370 (RTLLTIFVASSINDYERKIVTALRDVPSRAWSIEVQRFSEQLGNDTTALSGSGFFYLTR) the chain is Cytoplasmic. Residues 371-391 (SLVLAMGTTIITYELMISDVI) form a helical membrane-spanning segment. The Extracellular segment spans residues 392–406 (NQGSIRQKTQYCREY).

The protein belongs to the insect chemoreceptor superfamily. Gustatory receptor (GR) family. Gr5a subfamily. Expressed in Gr5a-expressing sugar-sensing cells.

It is found in the cell membrane. Its function is as follows. One of the few identified sugar gustatory receptors identified so far and which promotes the starvation-induced increase of feeding motivation. The sequence is that of Gustatory receptor for sugar taste 64b (Gr64b) from Drosophila melanogaster (Fruit fly).